The following is a 338-amino-acid chain: Fructose-1,6-bisphosphatase 1 (338 aa).

Alanine 2 is subject to N-acetylalanine. AMP is bound by residues 18–22 (VMEQG) and 28–32 (TGELT). Residues aspartate 69 and glutamate 98 each coordinate Mg(2+). Position 113–114 (113–114 (KY)) interacts with AMP. Mg(2+) is bound by residues aspartate 119, leucine 121, and aspartate 122. 122-125 (DGSS) is a substrate binding site. Arginine 141 contributes to the AMP binding site. Position 151 is an N6-succinyllysine (lysine 151). Residues 213 to 216 (NEGY), 244 to 249 (RYVGSM), tyrosine 265, and 275 to 277 (KLR) contribute to the substrate site. Tyrosine 216, tyrosine 245, and tyrosine 265 each carry phosphotyrosine. Glutamate 281 provides a ligand contact to Mg(2+).

Belongs to the FBPase class 1 family. As to quaternary structure, homotetramer. It depends on Mg(2+) as a cofactor. Detected in pancreatic beta-cell lines MIN6 and beta-TC and in liver (at protein level). Preferentially expressed in liver, with lower levels detected in pancreatic islets and intestine, and very low levels in blood, muscle, brain and spleen.

The catalysed reaction is beta-D-fructose 1,6-bisphosphate + H2O = beta-D-fructose 6-phosphate + phosphate. It functions in the pathway carbohydrate biosynthesis; gluconeogenesis. With respect to regulation, subject to complex allosteric regulation. The enzyme can assume an active R-state, or an inactive T-state. Intermediate conformations may exist. AMP acts as an allosteric inhibitor. AMP binding affects the turnover of bound substrate and not the affinity for substrate. Fructose 2,6-bisphosphate acts as a competitive inhibitor. Fructose 2,6-bisphosphate and AMP have synergistic effects. Functionally, catalyzes the hydrolysis of fructose 1,6-bisphosphate to fructose 6-phosphate in the presence of divalent cations, acting as a rate-limiting enzyme in gluconeogenesis. Plays a role in regulating glucose sensing and insulin secretion of pancreatic beta-cells. Appears to modulate glycerol gluconeogenesis in liver. Important regulator of appetite and adiposity; increased expression of the protein in liver after nutrient excess increases circulating satiety hormones and reduces appetite-stimulating neuropeptides and thus seems to provide a feedback mechanism to limit weight gain. This is Fructose-1,6-bisphosphatase 1 (Fbp1) from Mus musculus (Mouse).